A 365-amino-acid chain; its full sequence is MTRRCSHCNHNGHNSRTCPNRGVKLFGVRLTEGSIRKSASMGNLSHYTGSGSGGHGTGSNTPGSPGDVPDHVAGDGYASEDFVAGSSSSRERKKGTPWTEEEHRMFLLGLQKLGKGDWRGISRNYVTTRTPTQVASHAQKYFIRQSNVSRRKRRSSLFDMVPDEVGDIPMDLQEPEEDNIPVETEMQGADSIHQTLAPSSLHAPSILEIEECESMDSTNSTTGEPTATAAAASSSSRLEETTQLQSQLQPQPQLPGSFPILYPTYFSPYYPFPFPIWPAGYVPEPPKKEETHEILRPTAVHSKAPINVDELLGMSKLSLAESNKHGESDQSLSLKLGGGSSSRQSAFHPNPSSDSSDIKSVIHAL.

Positions 1–21 are disordered; that stretch reads MTRRCSHCNHNGHNSRTCPNR. The segment at 3 to 20 adopts a CCHC-type zinc-finger fold; it reads RRCSHCNHNGHNSRTCPN. Over residues 8–18 the composition is skewed to polar residues; the sequence is CNHNGHNSRTC. The short motif at 24-28 is the R/KLFGV (transcriptional repression) element; it reads KLFGV. The tract at residues 41 to 99 is disordered; it reads MGNLSHYTGSGSGGHGTGSNTPGSPGDVPDHVAGDGYASEDFVAGSSSSRERKKGTPWT. The HTH myb-type domain occupies 90–146; that stretch reads RERKKGTPWTEEEHRMFLLGLQKLGKGDWRGISRNYVTTRTPTQVASHAQKYFIRQS. The H-T-H motif DNA-binding region spans 118–142; it reads WRGISRNYVTTRTPTQVASHAQKYF. Disordered regions lie at residues 214 to 254 and 321 to 365; these read SMDS…QPQL and ESNK…IHAL. The span at 220–254 shows a compositional bias: low complexity; that stretch reads STTGEPTATAAAASSSSRLEETTQLQSQLQPQPQL. The span at 343 to 355 shows a compositional bias: polar residues; that stretch reads RQSAFHPNPSSDS.

In terms of tissue distribution, expressed ubiquitously, except in hypocotyls, root tips and lateral root primordia.

Its subcellular location is the nucleus. Transcriptional repressor. Direct regulator of the transcription of peroxidase (Prxs) and reactive oxygen species (ROS)-related genes via the recognition of 5'-ATCACA-3' motif. Binds to 5'-TATCCA-3' motif (TA box) and represses the activity of corresponding promoters (e.g. sugar response genes). Regulates hypocotyl elongation in response to darkness by enhancing auxin accumulation in a phytochrome-interacting factor (PIF) proteins-dependent manner. Promotes lateral roots formation. Promotes cell expansion during leaves development via the modulation of cell wall-located Prxs. Plays a critical role in developmentally regulated and dark-induced onset of leaf senescence by repressing the transcription of several genes involved in chloroplast function and responses to light and auxin. Promotes responses to auxin, abscisic acid (ABA), and ethylene. This Arabidopsis thaliana (Mouse-ear cress) protein is Transcription factor KUA1.